Consider the following 136-residue polypeptide: UPF0275 protein PM0493 (136 aa).

The protein belongs to the UPF0275 family.

The protein is UPF0275 protein PM0493 of Pasteurella multocida (strain Pm70).